Consider the following 329-residue polypeptide: Arylacetonitrilase (329 aa).

The CN hydrolase domain occupies 6–279 (VRVAVTQAEP…EGIVYANLDM (274 aa)). Glu46 functions as the Proton acceptor in the catalytic mechanism. Residue Lys126 is part of the active site. The active-site Nucleophile is Cys161.

Belongs to the carbon-nitrogen hydrolase superfamily. Nitrilase family.

The enzyme catalyses a nitrile + 2 H2O = a carboxylate + NH4(+). It catalyses the reaction 4-chlorophenylacetonitrile + 2 H2O = 4-chlorophenylacetate + NH4(+). Its function is as follows. Nitrilase that hydrolyzes preferentially phenylacetonitrile and heteroaromatic nitriles, but has significantly lower activity for (R,S)-mandelonitrile. Also acts on dinitriles like phenylenediacetonitriles (PDAs) 1,2-PDA, 1,3-PDA, and 1,4-PDA, and cyanophenyl acetonitriles (CPAs) 2-CPA and 4-CPA. The protein is Arylacetonitrilase of Hypocrea virens (strain Gv29-8 / FGSC 10586) (Gliocladium virens).